The sequence spans 563 residues: Protein disulfide isomerase-like 1-4 (563 aa).

Residues M1–A22 form the signal peptide. The segment at N40 to Q64 is disordered. One can recognise a Thioredoxin 1 domain in the interval L46 to A180. The N-linked (GlcNAc...) asparagine glycan is linked to N82. Active-site nucleophile residues include C102 and C105. The cysteines at positions 102 and 105 are disulfide-linked. Residues N185 and N315 are each glycosylated (N-linked (GlcNAc...) asparagine). The Thioredoxin 2 domain occupies F394–S523. Catalysis depends on nucleophile residues C444 and C447. C444 and C447 are joined by a disulfide. A compositionally biased stretch (basic and acidic residues) spans K529–Q542. Residues K529–L563 are disordered. The span at S543–L563 shows a compositional bias: polar residues. The short motif at K560 to L563 is the Prevents secretion from ER element.

Belongs to the protein disulfide isomerase family.

It localises to the endoplasmic reticulum lumen. The catalysed reaction is Catalyzes the rearrangement of -S-S- bonds in proteins.. In terms of biological role, acts as a protein-folding catalyst that interacts with nascent polypeptides to catalyze the formation, isomerization, and reduction or oxidation of disulfide bonds. May play a role in storage protein biogenesis. This Oryza sativa subsp. japonica (Rice) protein is Protein disulfide isomerase-like 1-4 (PDIL1-4).